The following is a 185-amino-acid chain: Pyruvate/ketoisovalerate oxidoreductases common subunit gamma (185 aa).

Heterotetramer of one alpha, one beta, one delta and one gamma chain.

The enzyme catalyses 2 oxidized [2Fe-2S]-[ferredoxin] + pyruvate + CoA = 2 reduced [2Fe-2S]-[ferredoxin] + acetyl-CoA + CO2 + H(+). It carries out the reaction 3-methyl-2-oxobutanoate + 2 oxidized [2Fe-2S]-[ferredoxin] + CoA = 2-methylpropanoyl-CoA + 2 reduced [2Fe-2S]-[ferredoxin] + CO2 + H(+). The sequence is that of Pyruvate/ketoisovalerate oxidoreductases common subunit gamma (porG) from Pyrococcus abyssi (strain GE5 / Orsay).